The chain runs to 99 residues: EPIDERMAL PATTERNING FACTOR-like protein 8 (99 aa).

A signal peptide spans M1–H35. 3 disulfide bridges follow: C53/C90, C57/C63, and C60/C92.

The protein belongs to the plant cysteine rich small secretory peptide family. Epidermal patterning factor subfamily.

It localises to the secreted. Its function is as follows. Controls stomatal patterning. In Arabidopsis thaliana (Mouse-ear cress), this protein is EPIDERMAL PATTERNING FACTOR-like protein 8.